A 33-amino-acid polypeptide reads, in one-letter code: Pardaxin P-2 (33 aa).

It belongs to the pardaxin family. In terms of assembly, in aqueous solution exists as a tetramer.

It is found in the secreted. Its subcellular location is the target cell membrane. In terms of biological role, exhibits unusual shark repellent and surfactant properties. Forms voltage-dependent, ion-permeable channels in membranes. At high concentration causes cell membrane lysis. This is Pardaxin P-2 from Pardachirus pavoninus (Peacock sole).